Consider the following 419-residue polypeptide: Tyrosine--tRNA ligase (419 aa).

Tyr-42 is an L-tyrosine binding site. The 'HIGH' region signature appears at 47 to 56 (CTAPSLHVGS). L-tyrosine-binding residues include Tyr-179 and Gln-183. Residues 239–243 (KMGKT) carry the 'KMSKS' region motif. Lys-242 lines the ATP pocket. The S4 RNA-binding domain occupies 353 to 419 (LGVLAAFVKA…RKRHVLLKLV (67 aa)).

It belongs to the class-I aminoacyl-tRNA synthetase family. TyrS type 1 subfamily. As to quaternary structure, homodimer.

It localises to the cytoplasm. The catalysed reaction is tRNA(Tyr) + L-tyrosine + ATP = L-tyrosyl-tRNA(Tyr) + AMP + diphosphate + H(+). In terms of biological role, catalyzes the attachment of tyrosine to tRNA(Tyr) in a two-step reaction: tyrosine is first activated by ATP to form Tyr-AMP and then transferred to the acceptor end of tRNA(Tyr). In Methylocella silvestris (strain DSM 15510 / CIP 108128 / LMG 27833 / NCIMB 13906 / BL2), this protein is Tyrosine--tRNA ligase.